Consider the following 395-residue polypeptide: Elongation factor Tu (395 aa).

A tr-type G domain is found at 10–204 (KPHVNIGTIG…AVDEYIPTPQ (195 aa)). Residues 19–26 (GHVDHGKT) form a G1 region. GTP is bound at residue 19 to 26 (GHVDHGKT). Mg(2+) is bound at residue T26. Residues 60 to 64 (GITIS) are G2. The segment at 81–84 (DCPG) is G3. GTP is bound by residues 81–85 (DCPGH) and 136–139 (NKCD). Residues 136–139 (NKCD) are G4. The G5 stretch occupies residues 174-176 (SAL).

It belongs to the TRAFAC class translation factor GTPase superfamily. Classic translation factor GTPase family. EF-Tu/EF-1A subfamily. In terms of assembly, monomer.

The protein resides in the cytoplasm. The enzyme catalyses GTP + H2O = GDP + phosphate + H(+). Functionally, GTP hydrolase that promotes the GTP-dependent binding of aminoacyl-tRNA to the A-site of ribosomes during protein biosynthesis. The polypeptide is Elongation factor Tu (Geobacillus sp. (strain WCH70)).